The chain runs to 330 residues: Biotin synthase (330 aa).

Residues 43-272 enclose the Radical SAM core domain; it reads FMGDKFDTCS…RAFLRFSGGR (230 aa). 3 residues coordinate [4Fe-4S] cluster: cysteine 61, cysteine 65, and cysteine 68. Positions 105, 137, 197, and 267 each coordinate [2Fe-2S] cluster.

This sequence belongs to the radical SAM superfamily. Biotin synthase family. As to quaternary structure, homodimer. It depends on [4Fe-4S] cluster as a cofactor. Requires [2Fe-2S] cluster as cofactor.

The enzyme catalyses (4R,5S)-dethiobiotin + (sulfur carrier)-SH + 2 reduced [2Fe-2S]-[ferredoxin] + 2 S-adenosyl-L-methionine = (sulfur carrier)-H + biotin + 2 5'-deoxyadenosine + 2 L-methionine + 2 oxidized [2Fe-2S]-[ferredoxin]. It functions in the pathway cofactor biosynthesis; biotin biosynthesis; biotin from 7,8-diaminononanoate: step 2/2. Functionally, catalyzes the conversion of dethiobiotin (DTB) to biotin by the insertion of a sulfur atom into dethiobiotin via a radical-based mechanism. The polypeptide is Biotin synthase (Porphyromonas gingivalis (strain ATCC 33277 / DSM 20709 / CIP 103683 / JCM 12257 / NCTC 11834 / 2561)).